Consider the following 110-residue polypeptide: MKEVKAVHKYAKTSAFKARLVADQIRLKSVEEALNILSFSNKKAAVLVKKVLNSVISNAEHNDGLDIDELFVTSIYIDEGSTMKRIRPRAKGRANRILKRTSHITVGIGK.

The protein belongs to the universal ribosomal protein uL22 family. As to quaternary structure, part of the 50S ribosomal subunit.

Its function is as follows. This protein binds specifically to 23S rRNA; its binding is stimulated by other ribosomal proteins, e.g. L4, L17, and L20. It is important during the early stages of 50S assembly. It makes multiple contacts with different domains of the 23S rRNA in the assembled 50S subunit and ribosome. In terms of biological role, the globular domain of the protein is located near the polypeptide exit tunnel on the outside of the subunit, while an extended beta-hairpin is found that lines the wall of the exit tunnel in the center of the 70S ribosome. The protein is Large ribosomal subunit protein uL22 of Vesicomyosocius okutanii subsp. Calyptogena okutanii (strain HA).